The sequence spans 452 residues: Probable phosphoglucosamine mutase (452 aa).

The Phosphoserine intermediate role is filled by Ser-96. Mg(2+) is bound by residues Ser-96, Asp-233, Asp-235, and Asp-237. At Ser-96 the chain carries Phosphoserine.

Belongs to the phosphohexose mutase family. The cofactor is Mg(2+). Post-translationally, activated by phosphorylation.

The enzyme catalyses alpha-D-glucosamine 1-phosphate = D-glucosamine 6-phosphate. Functionally, catalyzes the conversion of glucosamine-6-phosphate to glucosamine-1-phosphate. This is Probable phosphoglucosamine mutase from Pyrococcus furiosus (strain ATCC 43587 / DSM 3638 / JCM 8422 / Vc1).